Here is a 511-residue protein sequence, read N- to C-terminus: Maturase K (511 aa).

It belongs to the intron maturase 2 family. MatK subfamily.

It is found in the plastid. The protein localises to the chloroplast. Functionally, usually encoded in the trnK tRNA gene intron. Probably assists in splicing its own and other chloroplast group II introns. In Acorus calamus var. americanus (American sweet flag), this protein is Maturase K.